Consider the following 132-residue polypeptide: Myelin P2 protein (132 aa).

An N-acetylserine modification is found at Ser2. Arg107 is a (9Z)-octadecenoate binding site. Arg107 contacts hexadecanoate. A disulfide bond links Cys118 and Cys125. 127–129 (RIY) is a (9Z)-octadecenoate binding site. 127–129 (RIY) lines the hexadecanoate pocket.

It belongs to the calycin superfamily. Fatty-acid binding protein (FABP) family. As to quaternary structure, monomer.

It localises to the cytoplasm. May play a role in lipid transport protein in Schwann cells. May bind cholesterol. The sequence is that of Myelin P2 protein (PMP2) from Bos taurus (Bovine).